The sequence spans 388 residues: Succinate--CoA ligase [ADP-forming] subunit beta (388 aa).

The ATP-grasp domain occupies 9 to 244 (KGVLSSFGVT…PDEYAAEELE (236 aa)). Residues lysine 46, 53–55 (GRG), glutamate 99, valine 102, and glutamate 107 each bind ATP. 2 residues coordinate Mg(2+): asparagine 199 and aspartate 213. Residues asparagine 264 and 320–322 (GIM) each bind substrate.

It belongs to the succinate/malate CoA ligase beta subunit family. In terms of assembly, heterotetramer of two alpha and two beta subunits. The cofactor is Mg(2+).

The catalysed reaction is succinate + ATP + CoA = succinyl-CoA + ADP + phosphate. It catalyses the reaction GTP + succinate + CoA = succinyl-CoA + GDP + phosphate. The protein operates within carbohydrate metabolism; tricarboxylic acid cycle; succinate from succinyl-CoA (ligase route): step 1/1. Succinyl-CoA synthetase functions in the citric acid cycle (TCA), coupling the hydrolysis of succinyl-CoA to the synthesis of either ATP or GTP and thus represents the only step of substrate-level phosphorylation in the TCA. The beta subunit provides nucleotide specificity of the enzyme and binds the substrate succinate, while the binding sites for coenzyme A and phosphate are found in the alpha subunit. The chain is Succinate--CoA ligase [ADP-forming] subunit beta from Anaplasma marginale (strain St. Maries).